We begin with the raw amino-acid sequence, 709 residues long: DCC-interacting protein 13-alpha (709 aa).

The segment at 1 to 428 is required for RAB5A binding; the sequence is MPGIDKLPIE…RPPTARTSSS (428 aa). The BAR domain maps to 3 to 268; that stretch reads GIDKLPIEET…DPLYVPDPDP (266 aa). The stretch at 215–259 forms a coiled coil; the sequence is SENLNEQLEEFLANIGTSVQNVRREMDSDIETMQQTIEDLEVASD. The 99-residue stretch at 277 to 375 folds into the PH domain; sequence LTRKAGYLNA…WICTINNISK (99 aa). Disordered regions lie at residues 397–434, 467–491, and 645–709; these read AVTP…LGSE, GQAK…STKS, and VKEK…ESEA. Residue T399 is modified to Phosphothreonine. At S401 the chain carries Phosphoserine. Positions 403–414 match the F&amp;H motif; it reads SFQQRHESLRPA. S410 is modified (phosphoserine; by PKA). One can recognise a PID domain in the interval 496-656; that stretch reads SILHQLFIVR…EKQQKELNKQ (161 aa). A coiled-coil region spans residues 621-673; it reads LAKQIALHAELDRRASEKQKEIERVKEKQQKELNKQKQIEKDLEEQSRLIAAS. Residues 645 to 667 are compositionally biased toward basic and acidic residues; the sequence is VKEKQQKELNKQKQIEKDLEEQS. The span at 674-693 shows a compositional bias: polar residues; the sequence is SRPNQASSEGQFVVLSSSQS. 2 positions are modified to phosphoserine: S693 and S696. Residues 700 to 709 show a composition bias toward basic and acidic residues; the sequence is EGGKKRESEA.

As to quaternary structure, homodimer. Binds RAB5A/Rab5 through an N-terminal domain. This interaction is essential for its recruitment to endosomal membranes as well as its role in cell proliferation. Binds DCC and the catalytic domain of the inactive form of AKT2 through its PID domain. Binds PIK3CA and subunits of the NuRD/MeCP1 complex. Interacts with OCRL and INPP5B. Interacts with NTRK2. Interacts with APPL2; interaction is independent of follicle stimulating hormone stimulation; interaction is decreased by adiponectin in a time-dependent manner. Forms a complex with APPL2 and RUVBL2. Forms a complex comprising APPL2, RUVBL2, CTNNB1, HDAC1 and HDAC2; interaction reduces interaction between CTNNB1, HDAC1, HDAC2 and RUVBL2 leading to the decrease of deacetylase activity of this complex; affects the recruitment of repressive complexes to the Wnt target genes. Interacts with ANXA2. Interacts with TGFBR1; interaction is TGF beta dependent; mediates trafficking of the TGFBR1 from the endosomes to the nucleus via microtubules in a TRAF6-dependent manner. Interacts with PRKCZ. Interacts with PIK3R1 and APPL2. Interacts with ADIPOR1; ADIPOQ enhances this interaction; inhibites adiponectin-stimulated binding of APPL2 to ADIPOR1. Post-translationally, phosphorylation at Ser-410 by PKA severely impairs binding to OCRL. As to expression, high levels in heart, ovary, pancreas and skeletal muscle.

Its subcellular location is the early endosome membrane. The protein resides in the nucleus. The protein localises to the cytoplasm. It localises to the endosome. It is found in the cell projection. Its subcellular location is the ruffle. The protein resides in the cytoplasmic vesicle. The protein localises to the phagosome. Multifunctional adapter protein that binds to various membrane receptors, nuclear factors and signaling proteins to regulate many processes, such as cell proliferation, immune response, endosomal trafficking and cell metabolism. Regulates signaling pathway leading to cell proliferation through interaction with RAB5A and subunits of the NuRD/MeCP1 complex. Functions as a positive regulator of innate immune response via activation of AKT1 signaling pathway by forming a complex with APPL1 and PIK3R1. Inhibits Fc-gamma receptor-mediated phagocytosis through PI3K/Akt signaling in macrophages. Regulates TLR4 signaling in activated macrophages. Involved in trafficking of the TGFBR1 from the endosomes to the nucleus via microtubules in a TRAF6-dependent manner. Plays a role in cell metabolism by regulating adiponecting and insulin signaling pathways. Required for fibroblast migration through HGF cell signaling. Positive regulator of beta-catenin/TCF-dependent transcription through direct interaction with RUVBL2/reptin resulting in the relief of RUVBL2-mediated repression of beta-catenin/TCF target genes by modulating the interactions within the beta-catenin-reptin-HDAC complex. This Homo sapiens (Human) protein is DCC-interacting protein 13-alpha.